The chain runs to 206 residues: uncharacterized protein (206 aa).

The Nudix hydrolase domain occupies 29 to 169 (YWHSTFHCWV…DGVFAEGFIV (141 aa)). Residues 69–90 (AGHIKSGESIEDGVRELKEELG) carry the Nudix box motif. Mg(2+)-binding residues include Glu-84 and Glu-88.

It belongs to the Nudix hydrolase family. The cofactor is Mg(2+).

This is an uncharacterized protein from Clostridium acetobutylicum (strain ATCC 824 / DSM 792 / JCM 1419 / IAM 19013 / LMG 5710 / NBRC 13948 / NRRL B-527 / VKM B-1787 / 2291 / W).